An 88-amino-acid chain; its full sequence is Small ribosomal subunit protein uS15 (88 aa).

The segment at 1-23 (MIASSVKAEVVKSNARSANDTGS) is disordered. A compositionally biased stretch (polar residues) spans 14–23 (NARSANDTGS).

It belongs to the universal ribosomal protein uS15 family. In terms of assembly, part of the 30S ribosomal subunit. Forms a bridge to the 50S subunit in the 70S ribosome, contacting the 23S rRNA.

Its function is as follows. One of the primary rRNA binding proteins, it binds directly to 16S rRNA where it helps nucleate assembly of the platform of the 30S subunit by binding and bridging several RNA helices of the 16S rRNA. Forms an intersubunit bridge (bridge B4) with the 23S rRNA of the 50S subunit in the ribosome. This Delftia acidovorans (strain DSM 14801 / SPH-1) protein is Small ribosomal subunit protein uS15.